The sequence spans 199 residues: MAKILVLYYSMYGHIETLASAIAEGAQKVDGVEVTIKRVPETMPADAFAKAGGKTDQKAPVATPQELADYHGIIFGTPTRFGNMAGQMRTFLDQTGGLWASGALYGKVASVFASTGTGGGQEHTITSTWTTLAHHGFIIVPIGYGATELFDVSQTRGGTPYGATTIAGGDGSRQPSAEELAIARFQGEHVAKITAKLAR.

Residues 4–190 (ILVLYYSMYG…AIARFQGEHV (187 aa)) enclose the Flavodoxin-like domain. Residues 10–15 (SMYGHI) and 79–81 (TRF) each bind FMN. Tyr-12 provides a ligand contact to NAD(+). Substrate is bound at residue Trp-99. FMN is bound by residues 114–119 (STGTGG) and His-134.

The protein belongs to the WrbA family. It depends on FMN as a cofactor.

It catalyses the reaction a quinone + NADH + H(+) = a quinol + NAD(+). The enzyme catalyses a quinone + NADPH + H(+) = a quinol + NADP(+). This is NAD(P)H dehydrogenase (quinone) from Yersinia enterocolitica serotype O:8 / biotype 1B (strain NCTC 13174 / 8081).